A 191-amino-acid chain; its full sequence is UPF0398 protein LSEI_1479 (191 aa).

This sequence belongs to the UPF0398 family.

The polypeptide is UPF0398 protein LSEI_1479 (Lacticaseibacillus paracasei (strain ATCC 334 / BCRC 17002 / CCUG 31169 / CIP 107868 / KCTC 3260 / NRRL B-441) (Lactobacillus paracasei)).